A 767-amino-acid polypeptide reads, in one-letter code: AMP deaminase 3 (767 aa).

Phosphoserine occurs at positions 85 and 107. 2 disordered regions span residues 89–111 and 181–205; these read QMPP…PTTP and LGHP…PLPQ. 2 residues coordinate Zn(2+): His317 and His319. Residues His319 and 388-393 contribute to the substrate site; that span reads KFNSKY. His586 is a binding site for Zn(2+). Glu589 provides a ligand contact to substrate. Residue His608 is the Proton acceptor of the active site. Residue Asp663 participates in Zn(2+) binding. 664-667 lines the substrate pocket; sequence DPMQ.

This sequence belongs to the metallo-dependent hydrolases superfamily. Adenosine and AMP deaminases family. Homotetramer. The cofactor is Zn(2+).

It catalyses the reaction AMP + H2O + H(+) = IMP + NH4(+). The protein operates within purine metabolism; IMP biosynthesis via salvage pathway; IMP from AMP: step 1/1. Functionally, AMP deaminase plays a critical role in energy metabolism. The chain is AMP deaminase 3 from Homo sapiens (Human).